The following is a 485-amino-acid chain: Alginate biosynthesis protein AlgA (485 aa).

Belongs to the mannose-6-phosphate isomerase type 2 family. In terms of assembly, monomer. Co(2+) is required as a cofactor.

It carries out the reaction D-mannose 6-phosphate = D-fructose 6-phosphate. It catalyses the reaction alpha-D-mannose 1-phosphate + GTP + H(+) = GDP-alpha-D-mannose + diphosphate. It functions in the pathway nucleotide-sugar biosynthesis; GDP-alpha-D-mannose biosynthesis; GDP-alpha-D-mannose from alpha-D-mannose 1-phosphate (GTP route): step 1/1. It participates in nucleotide-sugar biosynthesis; GDP-alpha-D-mannose biosynthesis; alpha-D-mannose 1-phosphate from D-fructose 6-phosphate: step 1/2. Its function is as follows. Produces a precursor for alginate polymerization. The alginate layer provides a protective barrier against host immune defenses and antibiotics. The polypeptide is Alginate biosynthesis protein AlgA (algA) (Pseudomonas putida (strain ATCC 47054 / DSM 6125 / CFBP 8728 / NCIMB 11950 / KT2440)).